Here is a 105-residue protein sequence, read N- to C-terminus: Large ribosomal subunit protein eL30 (105 aa).

Glycyl lysine isopeptide (Lys-Gly) (interchain with G-Cter in ubiquitin) cross-links involve residues lysine 22, lysine 53, and lysine 83.

Belongs to the eukaryotic ribosomal protein eL30 family. In terms of assembly, component of the large ribosomal subunit (LSU). Mature yeast ribosomes consist of a small (40S) and a large (60S) subunit. The 40S small subunit contains 1 molecule of ribosomal RNA (18S rRNA) and 33 different proteins (encoded by 57 genes). The large 60S subunit contains 3 rRNA molecules (25S, 5.8S and 5S rRNA) and 46 different proteins (encoded by 81 genes).

Its subcellular location is the cytoplasm. Its function is as follows. Component of the ribosome, a large ribonucleoprotein complex responsible for the synthesis of proteins in the cell. The small ribosomal subunit (SSU) binds messenger RNAs (mRNAs) and translates the encoded message by selecting cognate aminoacyl-transfer RNA (tRNA) molecules. The large subunit (LSU) contains the ribosomal catalytic site termed the peptidyl transferase center (PTC), which catalyzes the formation of peptide bonds, thereby polymerizing the amino acids delivered by tRNAs into a polypeptide chain. The nascent polypeptides leave the ribosome through a tunnel in the LSU and interact with protein factors that function in enzymatic processing, targeting, and the membrane insertion of nascent chains at the exit of the ribosomal tunnel. In Saccharomyces cerevisiae (strain ATCC 204508 / S288c) (Baker's yeast), this protein is Large ribosomal subunit protein eL30.